Here is a 236-residue protein sequence, read N- to C-terminus: Bacterial rhodopsin CSR3 (236 aa).

The Extracellular portion of the chain corresponds to 1–3 (MDA). A helical membrane pass occupies residues 4 to 25 (VAVVYGITAAGFAVGVAIVGYL). Over 26–34 (YASLEGSEE) the chain is Cytoplasmic. The chain crosses the membrane as a helical span at residues 35–56 (RSILAALALIPGFAGISYVAMA). Over 57–70 (FGIGTVTIGETTLV) the chain is Extracellular. Residues 71-92 (GFRYLDWVVTTPLLVGFVGYAA) traverse the membrane as a helical segment. Over 93 to 95 (GAS) the chain is Cytoplasmic. Residues 96–118 (RRAIFGVMVADALMILTGVGAVV) traverse the membrane as a helical segment. Residues 119–122 (ADGT) lie on the Extracellular side of the membrane. Residues 123-150 (LKWVLFGVSTVFHVSLFAYLYLVFPRSV) traverse the membrane as a helical segment. At 151-153 (PDD) the chain is on the cytoplasmic side. A helical transmembrane segment spans residues 154–181 (PQRIGLFSLLKNHIGLLWIAYPLVWLAG). The Extracellular portion of the chain corresponds to 182-189 (PEGLGLAT). Residues 190–222 (YVGVSITYAFLDLLAKVPYVYFFYARRQVFATK) form a helical membrane-spanning segment. Residue Lys205 is modified to N6-(retinylidene)lysine. Residues 223-236 (LLRDSGEVTATPAD) are Cytoplasmic-facing.

It belongs to the archaeal/bacterial/fungal opsin family.

The protein resides in the cell membrane. The polypeptide is Bacterial rhodopsin CSR3 (Haloarcula vallismortis (Halobacterium vallismortis)).